Here is a 129-residue protein sequence, read N- to C-terminus: uncharacterized protein (129 aa).

K121 is covalently cross-linked (Isoglutamyl lysine isopeptide (Lys-Gln) (interchain with Q-Cter in protein Pup)).

This is an uncharacterized protein from Mycolicibacterium smegmatis (strain ATCC 700084 / mc(2)155) (Mycobacterium smegmatis).